A 118-amino-acid polypeptide reads, in one-letter code: Small ribosomal subunit protein uS13 (118 aa).

Residues 94–118 are disordered; it reads GLPVRGQRTKTNARTRKGPRKPIKK.

This sequence belongs to the universal ribosomal protein uS13 family. In terms of assembly, part of the 30S ribosomal subunit. Forms a loose heterodimer with protein S19. Forms two bridges to the 50S subunit in the 70S ribosome.

Functionally, located at the top of the head of the 30S subunit, it contacts several helices of the 16S rRNA. In the 70S ribosome it contacts the 23S rRNA (bridge B1a) and protein L5 of the 50S subunit (bridge B1b), connecting the 2 subunits; these bridges are implicated in subunit movement. Contacts the tRNAs in the A and P-sites. The sequence is that of Small ribosomal subunit protein uS13 from Pasteurella multocida (strain Pm70).